Consider the following 207-residue polypeptide: Guanylate kinase (207 aa).

The Guanylate kinase-like domain occupies 4 to 184 (GTLYIVSAPS…ALSDLKTIIR (181 aa)). 11–18 (APSGAGKS) serves as a coordination point for ATP.

The protein belongs to the guanylate kinase family.

The protein resides in the cytoplasm. It catalyses the reaction GMP + ATP = GDP + ADP. In terms of biological role, essential for recycling GMP and indirectly, cGMP. This is Guanylate kinase (gmk) from Salmonella typhimurium (strain LT2 / SGSC1412 / ATCC 700720).